We begin with the raw amino-acid sequence, 440 residues long: 3-phosphoshikimate 1-carboxyvinyltransferase (440 aa).

Residues Lys26, Ser27, and Arg31 each coordinate 3-phosphoshikimate. Lys26 is a phosphoenolpyruvate binding site. Residues Gly100 and Arg134 each coordinate phosphoenolpyruvate. Residues Ser180, Ser181, Gln182, Ser208, Asp323, Asn346, and Lys350 each coordinate 3-phosphoshikimate. Gln182 serves as a coordination point for phosphoenolpyruvate. Asp323 serves as the catalytic Proton acceptor. Arg354, Arg398, and Lys423 together coordinate phosphoenolpyruvate.

It belongs to the EPSP synthase family. Monomer.

The protein localises to the cytoplasm. The enzyme catalyses 3-phosphoshikimate + phosphoenolpyruvate = 5-O-(1-carboxyvinyl)-3-phosphoshikimate + phosphate. Its pathway is metabolic intermediate biosynthesis; chorismate biosynthesis; chorismate from D-erythrose 4-phosphate and phosphoenolpyruvate: step 6/7. In terms of biological role, catalyzes the transfer of the enolpyruvyl moiety of phosphoenolpyruvate (PEP) to the 5-hydroxyl of shikimate-3-phosphate (S3P) to produce enolpyruvyl shikimate-3-phosphate and inorganic phosphate. The chain is 3-phosphoshikimate 1-carboxyvinyltransferase from Pasteurella multocida (strain Pm70).